Reading from the N-terminus, the 79-residue chain is DNA-directed RNA polymerase subunit omega (79 aa).

The protein belongs to the RNA polymerase subunit omega family. In terms of assembly, the RNAP catalytic core consists of 2 alpha, 1 beta, 1 beta' and 1 omega subunit. When a sigma factor is associated with the core the holoenzyme is formed, which can initiate transcription.

The enzyme catalyses RNA(n) + a ribonucleoside 5'-triphosphate = RNA(n+1) + diphosphate. Functionally, promotes RNA polymerase assembly. Latches the N- and C-terminal regions of the beta' subunit thereby facilitating its interaction with the beta and alpha subunits. In Thermotoga petrophila (strain ATCC BAA-488 / DSM 13995 / JCM 10881 / RKU-1), this protein is DNA-directed RNA polymerase subunit omega.